A 66-amino-acid polypeptide reads, in one-letter code: Protein translocase subunit SecE (66 aa).

Residues L29–V49 traverse the membrane as a helical segment.

The protein belongs to the SecE/SEC61-gamma family. As to quaternary structure, component of the Sec protein translocase complex. Heterotrimer consisting of SecY, SecE and SecG subunits. The heterotrimers can form oligomers, although 1 heterotrimer is thought to be able to translocate proteins. Interacts with the ribosome. Interacts with SecDF, and other proteins may be involved. Interacts with SecA.

The protein localises to the cell inner membrane. In terms of biological role, essential subunit of the Sec protein translocation channel SecYEG. Clamps together the 2 halves of SecY. May contact the channel plug during translocation. The polypeptide is Protein translocase subunit SecE (Rickettsia typhi (strain ATCC VR-144 / Wilmington)).